We begin with the raw amino-acid sequence, 313 residues long: Porphobilinogen deaminase (313 aa).

Residue Cys242 is modified to S-(dipyrrolylmethanemethyl)cysteine.

Belongs to the HMBS family. Monomer. Dipyrromethane serves as cofactor.

It catalyses the reaction 4 porphobilinogen + H2O = hydroxymethylbilane + 4 NH4(+). It participates in porphyrin-containing compound metabolism; protoporphyrin-IX biosynthesis; coproporphyrinogen-III from 5-aminolevulinate: step 2/4. In terms of biological role, tetrapolymerization of the monopyrrole PBG into the hydroxymethylbilane pre-uroporphyrinogen in several discrete steps. This chain is Porphobilinogen deaminase, found in Yersinia enterocolitica serotype O:8 / biotype 1B (strain NCTC 13174 / 8081).